The following is a 777-amino-acid chain: Glucocorticoid receptor (777 aa).

The segment covering 1-14 (MDSKESLTPGKEEN) has biased composition (basic and acidic residues). The segment at 1–22 (MDSKESLTPGKEENPSSVLTQE) is disordered. Residues 1–420 (MDSKESLTPG…TATTGPPPKL (420 aa)) form a modulating region. Position 8 is a phosphothreonine (threonine 8). Arginine 23 is modified (omega-N-methylarginine). 4 positions are modified to phosphoserine: serine 45, serine 113, serine 134, and serine 141. The tract at residues 130 to 182 (NRSTSVPENPKSSASSSVSAAPKEKEFPKTHSDVSSEQQNLKGQTGSNGGNVK) is disordered. The span at 134–150 (SVPENPKSSASSSVSAA) shows a compositional bias: low complexity. The segment covering 151 to 163 (PKEKEFPKTHSDV) has biased composition (basic and acidic residues). Over residues 164–174 (SSEQQNLKGQT) the composition is skewed to polar residues. 3 positions are modified to phosphoserine: serine 203, serine 211, and serine 226. Lysine 258 is covalently cross-linked (Glycyl lysine isopeptide (Lys-Gly) (interchain with G-Cter in SUMO2)). At serine 267 the chain carries Phosphoserine. Residues lysine 277 and lysine 293 each participate in a glycyl lysine isopeptide (Lys-Gly) (interchain with G-Cter in SUMO); alternate cross-link. Residues lysine 277 and lysine 293 each participate in a glycyl lysine isopeptide (Lys-Gly) (interchain with G-Cter in SUMO2); alternate cross-link. A compositionally biased stretch (low complexity) spans 394–414 (SSPSMRPDVSSPPSSSSTATT). The segment at 394-415 (SSPSMRPDVSSPPSSSSTATTG) is disordered. The residue at position 404 (serine 404) is a Phosphoserine. A Glycyl lysine isopeptide (Lys-Gly) (interchain with G-Cter in ubiquitin) cross-link involves residue lysine 419. 2 NR C4-type zinc fingers span residues 421 to 441 (CLVC…CGSC) and 457 to 481 (CAGR…YRKC). The segment at residues 421-486 (CLVCSDEASG…RYRKCLQAGM (66 aa)) is a DNA-binding region (nuclear receptor). N6-acetyllysine is present on residues lysine 480, lysine 492, lysine 494, and lysine 495. The tract at residues 485–777 (GMNLEARKTK…NIKKLLFHQK (293 aa)) is interaction with CLOCK. Residues 487–523 (NLEARKTKKKIKGIQQATTGVSQETSENPANKTIVPA) are hinge. The 235-residue stretch at 524–758 (TLPQLTPTLV…FPEMLAEIIT (235 aa)) folds into the NR LBD domain. The interaction with CRY1 stretch occupies residues 532-697 (LVSLLEVIEP…EIRMTYIKEL (166 aa)). A Glycyl lysine isopeptide (Lys-Gly) (interchain with G-Cter in SUMO) cross-link involves residue lysine 703.

The protein belongs to the nuclear hormone receptor family. NR3 subfamily. Heteromultimeric cytoplasmic complex with HSP90AA1, HSPA1A/HSPA1B, and FKBP5 or another immunophilin such as PPID, STIP1, or the immunophilin homolog PPP5C. Upon ligand binding FKBP5 dissociates from the complex and FKBP4 takes its place, thereby linking the complex to dynein and mediating transport to the nucleus, where the complex dissociates. Probably forms a complex composed of chaperones HSP90 and HSP70, co-chaperones CDC37, PPP5C, TSC1 and client protein TSC2, CDK4, AKT, RAF1 and NR3C1; this complex does not contain co-chaperones STIP1/HOP and PTGES3/p23. Directly interacts with UNC45A. Binds to DNA as a homodimer, and as heterodimer with NR3C2 or the retinoid X receptor. Binds STAT5A and STAT5B homodimers and heterodimers. Interacts with NRIP1, POU2F1, POU2F2 and TRIM28. Interacts with several coactivator complexes, including the SMARCA4 complex, CREBBP/EP300, TADA2L (Ada complex) and p160 coactivators such as NCOA2 and NCOA6. Interaction with BAG1 inhibits transactivation. Interacts with HEXIM1 and TGFB1I1. Interacts with NCOA1. Interacts with NCOA3, SMARCA4, SMARCC1, SMARCD1, and SMARCE1. Interacts with CLOCK, CRY1 and CRY2 in a ligand-dependent fashion. Interacts with CIART. Interacts with RWDD3. Interacts with UBE2I/UBC9 and this interaction is enhanced in the presence of RWDD3. Interacts with GRIP1. Interacts with NR4A3 (via nuclear receptor DNA-binding domain), represses transcription activity of NR4A3 on the POMC promoter Nur response element (NurRE). Directly interacts with PNRC2 to attract and form a complex with UPF1 and DCP1A; the interaction leads to rapid mRNA degradation. Interacts with GSK3B. Interacts with FNIP1 and FNIP2. Interacts (via C-terminus) with HNRNPU (via C-terminus). Interacts with MCM3AP. Interacts (via domain NR LBD) with HSP90AA1 and HSP90AB1. In the absence of hormonal ligand, interacts with TACC1. Interacts (via NR LBD domain) with ZNF764 (via KRAB domain); the interaction regulates transcription factor activity of NR3C1 by directing its actions toward certain biologic pathways. Acetylation by CLOCK reduces its binding to glucocorticoid response elements and its transcriptional activity. Post-translationally, increased proteasome-mediated degradation in response to glucocorticoids. In terms of processing, phosphorylated in the absence of hormone; becomes hyperphosphorylated in the presence of glucocorticoid. The Ser-203, Ser-226 and Ser-404-phosphorylated forms are mainly cytoplasmic, and the Ser-211-phosphorylated form is nuclear. Phosphorylation at Ser-211 increases transcriptional activity. Phosphorylation at Ser-203, Ser-226 and Ser-404 decreases signaling capacity. Phosphorylation at Ser-404 may protect from glucocorticoid-induced apoptosis. Phosphorylation at Ser-203 and Ser-211 is not required in regulation of chromosome segregation. May be dephosphorylated by PPP5C, attenuates NR3C1 action. Ubiquitinated by UBR5, leading to its degradation: UBR5 specifically recognizes and binds ligand-bound NR3C1 when it is not associated with coactivators (NCOAs). In presence of NCOAs, the UBR5-degron is not accessible, preventing its ubiquitination and degradation. Post-translationally, sumoylation at Lys-277 and Lys-293 negatively regulates its transcriptional activity. Sumoylation at Lys-703 positively regulates its transcriptional activity in the presence of RWDD3. Sumoylation at Lys-277 and Lys-293 is dispensable whereas sumoylation at Lys-703 is critical for the stimulatory effect of RWDD3 on its transcriptional activity. Heat shock increases sumoylation in a RWDD3-dependent manner.

The protein localises to the cytoplasm. It is found in the nucleus. It localises to the mitochondrion. The protein resides in the cytoskeleton. Its subcellular location is the spindle. The protein localises to the microtubule organizing center. It is found in the centrosome. It localises to the chromosome. The protein resides in the nucleoplasm. Receptor for glucocorticoids (GC). Has a dual mode of action: as a transcription factor that binds to glucocorticoid response elements (GRE), both for nuclear and mitochondrial DNA, and as a modulator of other transcription factors. Affects inflammatory responses, cellular proliferation and differentiation in target tissues. Involved in chromatin remodeling. Plays a role in rapid mRNA degradation by binding to the 5' UTR of target mRNAs and interacting with PNRC2 in a ligand-dependent manner which recruits the RNA helicase UPF1 and the mRNA-decapping enzyme DCP1A, leading to RNA decay. Could act as a coactivator for STAT5-dependent transcription upon growth hormone (GH) stimulation and could reveal an essential role of hepatic GR in the control of body growth. Mediates glucocorticoid-induced apoptosis. Promotes accurate chromosome segregation during mitosis. May act as a tumor suppressor. May play a negative role in adipogenesis through the regulation of lipolytic and antilipogenic gene expression. The polypeptide is Glucocorticoid receptor (NR3C1) (Saimiri boliviensis boliviensis (Bolivian squirrel monkey)).